The primary structure comprises 593 residues: MEDYKQRIKNKLNVVPMEPGCYLMKDRNDQVIYVGKAKKLRNRLRSYFTGAHDAKTTRLVGEIRRFEFIVTSSETESLLLELNLIKQYQPRYNILLKDDKSYPFIKITKEKYPRLLVTRTVKQGTGKYFGPYPNAYSAQETKKLLDRIYPYRKCDKMPDKLCLYYHIGQCLGPCVYDVDLSKYAQMTKEITDFLNGEDKTILKSLEERMLTASESLDFERAKEYRDLIQHIQNLTNKQKIMSSDKTIRDVFGYSVDKGWMCIQVFFIRQGNMIKRDTTMIPLQQTEEEEFYTFIGQFYSLNQHILPKEVHVPRNLDKEMIQSVVDTKIVQPARGPKKDMVDLAAHNAKVSLNNKFELISRDESRTIKAIEELGTQMGIQTPIRIEAFDNSNIQGVDPVSAMVTFVDGKPDKKNYRKYKIKTVKGPDDYKSMREVVRRRYSRVLNEGLPLPDLIIVDGGKGHMNGVIDVLQNELGLDIPVAGLQKNDKHQTSELLYGASAEIVPLKKNSQAFYLLHRIQDEVHRFAITFHRQTRQKTGLKSILDDIDGIGSKRKTLLLRSFGSIKKMKEATLEDFKNIGIPENVAKNLHEQLHK.

Residues 17-94 enclose the GIY-YIG domain; sequence MEPGCYLMKD…IKQYQPRYNI (78 aa). The UVR domain maps to 199 to 234; that stretch reads KTILKSLEERMLTASESLDFERAKEYRDLIQHIQNL.

It belongs to the UvrC family. In terms of assembly, interacts with UvrB in an incision complex.

The protein localises to the cytoplasm. The UvrABC repair system catalyzes the recognition and processing of DNA lesions. UvrC both incises the 5' and 3' sides of the lesion. The N-terminal half is responsible for the 3' incision and the C-terminal half is responsible for the 5' incision. This chain is UvrABC system protein C, found in Staphylococcus aureus (strain bovine RF122 / ET3-1).